Consider the following 174-residue polypeptide: Nascent polypeptide-associated complex subunit alpha (174 aa).

At S2 the chain carries N-acetylserine. In terms of domain architecture, NAC-A/B spans 14 to 78 (NKNEKKAREL…AKVDNFTQKL (65 aa)). The tract at residues 85 to 137 (AQASGIMPSNEDVATKSPEDIQADMQAAAEGSVNAAAEEDDEEGEVDAGDLNK) is disordered. S93 carries the post-translational modification Phosphoserine. Residues 111–120 (AAAEGSVNAA) show a composition bias toward low complexity. Positions 121 to 132 (AEEDDEEGEVDA) are enriched in acidic residues. Positions 135-174 (LNKDDIELVVQQTNVSKNQAIKALKAHNGDLVNAIMSLSK) constitute a UBA domain.

This sequence belongs to the NAC-alpha family. Part of the nascent polypeptide-associated complex (NAC), consisting of EGD2 and either EGD1 or BTT1. NAC associates with ribosomes via EGD1 or BTT1, and with the CCR4-NOT complex.

The protein resides in the cytoplasm. The protein localises to the nucleus. Its function is as follows. Component of the nascent polypeptide-associated complex (NAC), a dynamic component of the ribosomal exit tunnel, protecting the emerging polypeptides from interaction with other cytoplasmic proteins to ensure appropriate nascent protein targeting. The NAC complex also promotes mitochondrial protein import by enhancing productive ribosome interactions with the outer mitochondrial membrane and blocks the inappropriate interaction of ribosomes translating non-secretory nascent polypeptides with translocation sites in the membrane of the endoplasmic reticulum. EGD2 may also be involved in transcription regulation. The chain is Nascent polypeptide-associated complex subunit alpha (EGD2) from Saccharomyces cerevisiae (strain YJM789) (Baker's yeast).